A 158-amino-acid chain; its full sequence is 2-C-methyl-D-erythritol 2,4-cyclodiphosphate synthase (158 aa).

A divalent metal cation-binding residues include D9 and H11. Residues 9–11 (DVH) and 35–36 (HS) contribute to the 4-CDP-2-C-methyl-D-erythritol 2-phosphate site. H43 serves as a coordination point for a divalent metal cation. 4-CDP-2-C-methyl-D-erythritol 2-phosphate is bound by residues 57–59 (DIG), 62–66 (FPDTD), 101–107 (AQKPKMA), 133–136 (TTTE), F140, and R143.

Belongs to the IspF family. Homotrimer. It depends on a divalent metal cation as a cofactor.

It carries out the reaction 4-CDP-2-C-methyl-D-erythritol 2-phosphate = 2-C-methyl-D-erythritol 2,4-cyclic diphosphate + CMP. Its pathway is isoprenoid biosynthesis; isopentenyl diphosphate biosynthesis via DXP pathway; isopentenyl diphosphate from 1-deoxy-D-xylulose 5-phosphate: step 4/6. Its function is as follows. Involved in the biosynthesis of isopentenyl diphosphate (IPP) and dimethylallyl diphosphate (DMAPP), two major building blocks of isoprenoid compounds. Catalyzes the conversion of 4-diphosphocytidyl-2-C-methyl-D-erythritol 2-phosphate (CDP-ME2P) to 2-C-methyl-D-erythritol 2,4-cyclodiphosphate (ME-CPP) with a corresponding release of cytidine 5-monophosphate (CMP). The sequence is that of 2-C-methyl-D-erythritol 2,4-cyclodiphosphate synthase from Bacillus licheniformis (strain ATCC 14580 / DSM 13 / JCM 2505 / CCUG 7422 / NBRC 12200 / NCIMB 9375 / NCTC 10341 / NRRL NRS-1264 / Gibson 46).